The chain runs to 238 residues: Uracil-DNA glycosylase (238 aa).

The active-site Proton acceptor is Asp81.

This sequence belongs to the uracil-DNA glycosylase (UDG) superfamily. UNG family.

The protein localises to the cytoplasm. It catalyses the reaction Hydrolyzes single-stranded DNA or mismatched double-stranded DNA and polynucleotides, releasing free uracil.. Excises uracil residues from the DNA which can arise as a result of misincorporation of dUMP residues by DNA polymerase or due to deamination of cytosine. This is Uracil-DNA glycosylase from Corynebacterium efficiens (strain DSM 44549 / YS-314 / AJ 12310 / JCM 11189 / NBRC 100395).